The primary structure comprises 997 residues: Burkholderia TALE-like protein 2 (997 aa).

The Cryptic repeat -1 repeat unit spans residues 19–50; that stretch reads LSPLERIKIEKHYGGGATLAFISNQHDELAQV. A Cryptic repeat 0 repeat occupies 51–83; sequence LSRADILKIASYDCAAQALQAVLDCGPMLGKRG. 27 Core repeat repeats span residues 84 to 116, 117 to 147, 148 to 180, 181 to 213, 214 to 244, 245 to 277, 278 to 310, 311 to 343, 344 to 376, 377 to 409, 410 to 442, 443 to 475, 476 to 508, 509 to 539, 540 to 572, 573 to 605, 606 to 638, 639 to 671, 672 to 704, 705 to 737, 738 to 770, 771 to 803, 804 to 836, 837 to 869, 870 to 902, 903 to 935, and 936 to 967; these read FSRA…GKRG, FSQV…GERG, FSRG…RERG, FNQA…GKRG, FSRV…RKRG, FHPT…RERG, FSQA…CERG, FSQP…RERG, FSQA…HERG, FSQA…RERG, VRQA…RERG, FNQA…DKRG, FNPT…RERG, FNQA…RERG, FSQP…HKRG, FGQP…RERG, FSQS…RESD, FRQA…RQRG, FNRA…DERG, FNLT…QQRG, FNLT…RQRG, FNLI…RQRD, and LSLI…MQAG. The tract at residues 84-967 is buD domain; it reads FSRADIVRIA…KYGPVLMQAG (884 aa). ANK repeat units lie at residues 772-801, 805-834, 838-867, and 871-900; these read RQAD…RLRQ, NRAS…TLDE, NLTN…TLQQ, and NLTD…TLRQ. A Cryptic repeat +1 repeat occupies 968-997; sequence RSNEEIVHVAARRGGAGRIRKMVALLLERQ.

It belongs to the transcription activator-like effector (TALE) family. Bat subfamily.

Binds to DNA in a sequence-specific manner. The polypeptide is Burkholderia TALE-like protein 2 (Mycetohabitans rhizoxinica (strain DSM 19002 / CIP 109453 / HKI 454) (Paraburkholderia rhizoxinica)).